The following is a 159-amino-acid chain: Protein Smg homolog (159 aa).

It belongs to the Smg family.

In Vibrio parahaemolyticus serotype O3:K6 (strain RIMD 2210633), this protein is Protein Smg homolog.